Reading from the N-terminus, the 245-residue chain is OVARIAN TUMOR DOMAIN-containing deubiquitinating enzyme 11 (245 aa).

Positions 1–37 are disordered; the sequence is MDENHRNPFANASTSARASGSTSASSNSSFSSSVADT. The span at 10-35 shows a compositional bias: low complexity; the sequence is ANASTSARASGSTSASSNSSFSSSVA. In terms of domain architecture, OTU spans 101–225; the sequence is LAELQMEGDG…EVHYNSLYAN (125 aa). Asp-109 is an active-site residue. Cys-112 functions as the Nucleophile in the catalytic mechanism. The active site involves His-218.

The protein belongs to the peptidase C85 family.

The catalysed reaction is Thiol-dependent hydrolysis of ester, thioester, amide, peptide and isopeptide bonds formed by the C-terminal Gly of ubiquitin (a 76-residue protein attached to proteins as an intracellular targeting signal).. Functionally, hydrolase that can remove conjugated ubiquitin from proteins in vitro and may therefore play an important regulatory role at the level of protein turnover by preventing degradation. Inactive cysteine protease. This Arabidopsis thaliana (Mouse-ear cress) protein is OVARIAN TUMOR DOMAIN-containing deubiquitinating enzyme 11.